The chain runs to 264 residues: 3-methyl-2-oxobutanoate hydroxymethyltransferase (264 aa).

Residues Asp45 and Asp84 each coordinate Mg(2+). Residues Asp45–Ser46, Asp84, and Lys112 each bind 3-methyl-2-oxobutanoate. Glu114 lines the Mg(2+) pocket. Catalysis depends on Glu181, which acts as the Proton acceptor.

It belongs to the PanB family. In terms of assembly, homodecamer; pentamer of dimers. It depends on Mg(2+) as a cofactor.

It localises to the cytoplasm. The catalysed reaction is 3-methyl-2-oxobutanoate + (6R)-5,10-methylene-5,6,7,8-tetrahydrofolate + H2O = 2-dehydropantoate + (6S)-5,6,7,8-tetrahydrofolate. It functions in the pathway cofactor biosynthesis; (R)-pantothenate biosynthesis; (R)-pantoate from 3-methyl-2-oxobutanoate: step 1/2. Catalyzes the reversible reaction in which hydroxymethyl group from 5,10-methylenetetrahydrofolate is transferred onto alpha-ketoisovalerate to form ketopantoate. This chain is 3-methyl-2-oxobutanoate hydroxymethyltransferase, found in Vibrio campbellii (strain ATCC BAA-1116).